Reading from the N-terminus, the 206-residue chain is Small ribosomal subunit protein uS4 (206 aa).

Positions serine 96 to glutamate 157 constitute an S4 RNA-binding domain.

The protein belongs to the universal ribosomal protein uS4 family. Part of the 30S ribosomal subunit. Contacts protein S5. The interaction surface between S4 and S5 is involved in control of translational fidelity.

Functionally, one of the primary rRNA binding proteins, it binds directly to 16S rRNA where it nucleates assembly of the body of the 30S subunit. With S5 and S12 plays an important role in translational accuracy. In Neisseria gonorrhoeae (strain ATCC 700825 / FA 1090), this protein is Small ribosomal subunit protein uS4.